The sequence spans 555 residues: Chaperonin GroEL 2 (555 aa).

ATP-binding positions include 29–32, 86–90, Gly414, 480–482, and Asp496; these read TLGP, DGTTT, and NAL.

Belongs to the chaperonin (HSP60) family. In terms of assembly, forms a cylinder of 14 subunits composed of two heptameric rings stacked back-to-back. Interacts with the co-chaperonin GroES.

It is found in the cytoplasm. It carries out the reaction ATP + H2O + a folded polypeptide = ADP + phosphate + an unfolded polypeptide.. Functionally, together with its co-chaperonin GroES, plays an essential role in assisting protein folding. The GroEL-GroES system forms a nano-cage that allows encapsulation of the non-native substrate proteins and provides a physical environment optimized to promote and accelerate protein folding. In Synechococcus sp. (strain ATCC 27144 / PCC 6301 / SAUG 1402/1) (Anacystis nidulans), this protein is Chaperonin GroEL 2.